Reading from the N-terminus, the 612-residue chain is BTB/POZ domain-containing protein 9 (612 aa).

Residues 36 to 104 (GDVTFVVEKK…IYTGRATLTD (69 aa)) form the BTB domain. One can recognise a BACK domain in the interval 142 to 240 (VCMTFDVASL…SLTELLNVVR (99 aa)). The tract at residues 560–612 (QSSQKEENSEESGTGDTSLAGQQLDSHALRAPSGSSLPSSPGSNSRSPNRQHQ) is disordered. Residues 573 to 584 (TGDTSLAGQQLD) are compositionally biased toward polar residues. A compositionally biased stretch (low complexity) spans 588–612 (LRAPSGSSLPSSPGSNSRSPNRQHQ).

Detected in the brain (at protein level). Moderately expressed in all specific brain regions examined. Expressed in the dopaminergic neurons of the substantia nigra and A11 neurons. Highly expressed in kidney and moderately expressed in all other adult and fetal tissues.

This Homo sapiens (Human) protein is BTB/POZ domain-containing protein 9 (BTBD9).